Consider the following 451-residue polypeptide: uncharacterized protein (451 aa).

5 helical membrane-spanning segments follow: residues 11–31 (VLLK…YIDL), 56–76 (IQIY…SIGT), 151–171 (IIGI…NIYL), 175–195 (FWLI…LIIF), and 207–227 (VYSV…TIKI). Residues 250–300 (TKSNNNNNNNNNNKQDDNIIYDTDSSFNGQSSSSSSSSSSSSSSSSSATTT) form a disordered region. Low complexity-rich tracts occupy residues 253 to 262 (NNNNNNNNNN) and 280 to 300 (SSSS…ATTT). The next 2 membrane-spanning stretches (helical) occupy residues 392-412 (FVGV…SDYS) and 413-433 (LLTI…LTYL).

The protein resides in the membrane. This is an uncharacterized protein from Dictyostelium discoideum (Social amoeba).